A 391-amino-acid polypeptide reads, in one-letter code: B2 bradykinin receptor (391 aa).

Over 1 to 60 (MFSPWKISMFLSVREDSVPTTASFSADMLNVTLQGPTLNGTFAQSKCPQVEWLGWLNTIQ) the chain is Extracellular. Residues asparagine 30 and asparagine 39 are each glycosylated (N-linked (GlcNAc...) asparagine). Residues 61–84 (PPFLWVLFVLATLENIFVLSVFCL) form a helical membrane-spanning segment. Residues 85–93 (HKSSCTVAE) are Cytoplasmic-facing. A helical membrane pass occupies residues 94–118 (IYLGNLAAADLILACGLPFWAITIS). Residues 119–131 (NNFDWLFGETLCR) lie on the Extracellular side of the membrane. A disulfide bridge connects residues cysteine 130 and cysteine 211. Residues 132-153 (VVNAIISMNLYSSICFLMLVSI) form a helical membrane-spanning segment. Residues 154–175 (DRYLALVKTMSMGRMRGVRWAK) are Cytoplasmic-facing. Tyrosine 156 bears the Phosphotyrosine mark. A helical membrane pass occupies residues 176 to 198 (LYSLVIWGCTLLLSSPMLVFRTM). Residues 199–221 (KEYSDEGHNVTACVISYPSLIWE) are Extracellular-facing. Asparagine 207 is a glycosylation site (N-linked (GlcNAc...) asparagine). A helical transmembrane segment spans residues 222–248 (VFTNMLLNVVGFLLPLSVITFCTMQIM). Residues 249–267 (QVLRNNEMQKFKEIQTERR) lie on the Cytoplasmic side of the membrane. A helical membrane pass occupies residues 268–292 (ATVLVLVVLLLFIICWLPFQISTFL). Residues 293–311 (DTLHRLGILSSCQDERIID) are Extracellular-facing. Residues 312 to 335 (VITQIASFMAYSNSCLNPLVYVIV) form a helical membrane-spanning segment. Residues 336–391 (GKRFRKKSWEVYQGVCQKGGCRSEPIQMENSMGTLRTSISVERQIHKLQDWAGSRQ) are Cytoplasmic-facing. Tyrosine 347 is modified (phosphotyrosine). Cysteine 351 carries S-palmitoyl cysteine lipidation. Serine 366 carries the post-translational modification Phosphoserine. Residue threonine 369 is modified to Phosphothreonine. A phosphoserine; by GRK6 mark is found at serine 373 and serine 375.

This sequence belongs to the G-protein coupled receptor 1 family. Bradykinin receptor subfamily. BDKRB2 sub-subfamily. Forms a complex with PECAM1 and GNAQ. Interacts with PECAM1. In terms of tissue distribution, ubiquitous. Widespread in normal smooth muscle tissue and neurons.

The protein resides in the cell membrane. Functionally, receptor for bradykinin. It is associated with G proteins that activate a phosphatidylinositol-calcium second messenger system. The polypeptide is B2 bradykinin receptor (BDKRB2) (Homo sapiens (Human)).